The following is a 116-amino-acid chain: Flagellar transcriptional regulator FlhD (116 aa).

The protein belongs to the FlhD family. Homodimer; disulfide-linked. Forms a heterohexamer composed of two FlhC and four FlhD subunits. Each FlhC binds a FlhD dimer, forming a heterotrimer, and a hexamer assembles by dimerization of two heterotrimers.

The protein resides in the cytoplasm. In terms of biological role, functions in complex with FlhC as a master transcriptional regulator that regulates transcription of several flagellar and non-flagellar operons by binding to their promoter region. Activates expression of class 2 flagellar genes, including fliA, which is a flagellum-specific sigma factor that turns on the class 3 genes. Also regulates genes whose products function in a variety of physiological pathways. This is Flagellar transcriptional regulator FlhD from Proteus mirabilis (strain HI4320).